Consider the following 600-residue polypeptide: Glutamine--fructose-6-phosphate aminotransferase [isomerizing] (600 aa).

The active-site Nucleophile; for GATase activity is the cysteine 2. Residues cysteine 2–aspartate 217 form the Glutamine amidotransferase type-2 domain. SIS domains are found at residues isoleucine 283–isoleucine 422 and isoleucine 452–proline 590. The active-site For Fru-6P isomerization activity is the lysine 595.

In terms of assembly, homodimer.

The protein resides in the cytoplasm. It catalyses the reaction D-fructose 6-phosphate + L-glutamine = D-glucosamine 6-phosphate + L-glutamate. Functionally, catalyzes the first step in hexosamine metabolism, converting fructose-6P into glucosamine-6P using glutamine as a nitrogen source. The chain is Glutamine--fructose-6-phosphate aminotransferase [isomerizing] from Halalkalibacterium halodurans (strain ATCC BAA-125 / DSM 18197 / FERM 7344 / JCM 9153 / C-125) (Bacillus halodurans).